A 520-amino-acid chain; its full sequence is Flavin-dependent halogenase radH (520 aa).

Positions 14, 17, and 47 each coordinate FAD. The chloride site is built by Ser-330 and Gly-331.

Belongs to the flavin-dependent halogenase family.

It participates in secondary metabolite biosynthesis. Non-heme halogenase; part of the gene cluster that mediates the biosynthesis of radicicol, a resorcylic acid lactone (RAL) that irreversibly inhibits the HSP90 molecular chaperone, an important target for cancer chemotherapy. The cluster encodes only two apparent post-PKS enzymes, a cytochrome P450 monooxygenase (radP) and a non-heme halogenase (radH) that introduce the epoxide and the chlorine, respectively. If this cluster includes all the genes required for radicicol biosynthesis, the remaining structural features of radicicol are presumably generated by the PKSs rads1 and rads2. The C-2' ketone could arise if the R-PKS rads1 and NR-PKS rads2 each carry out four iterations, in contrast to the five iteration-three iteration split for the hypothemycin PKSs. The origin of the cis 5',6' double bond is not known. The radicicol R-PKS rads1 ER domain may catalyze either double bond isomerization or reduction in the third iteration. The polypeptide is Flavin-dependent halogenase radH (Floropilus chiversii (Chaetomium chiversii)).